We begin with the raw amino-acid sequence, 560 residues long: DNA ligase B (560 aa).

Lys-124 (N6-AMP-lysine intermediate) is an active-site residue.

Belongs to the NAD-dependent DNA ligase family. LigB subfamily.

The enzyme catalyses NAD(+) + (deoxyribonucleotide)n-3'-hydroxyl + 5'-phospho-(deoxyribonucleotide)m = (deoxyribonucleotide)n+m + AMP + beta-nicotinamide D-nucleotide.. Its function is as follows. Catalyzes the formation of phosphodiester linkages between 5'-phosphoryl and 3'-hydroxyl groups in double-stranded DNA using NAD as a coenzyme and as the energy source for the reaction. The protein is DNA ligase B of Escherichia coli O9:H4 (strain HS).